A 68-amino-acid chain; its full sequence is Large ribosomal subunit protein bL35 (68 aa).

This sequence belongs to the bacterial ribosomal protein bL35 family.

The sequence is that of Large ribosomal subunit protein bL35 from Rickettsia bellii (strain RML369-C).